The following is a 956-amino-acid chain: Glycine dehydrogenase (decarboxylating) 2 (956 aa).

Residue Lys-706 is modified to N6-(pyridoxal phosphate)lysine.

It belongs to the GcvP family. The glycine cleavage system is composed of four proteins: P, T, L and H. The cofactor is pyridoxal 5'-phosphate.

It catalyses the reaction N(6)-[(R)-lipoyl]-L-lysyl-[glycine-cleavage complex H protein] + glycine + H(+) = N(6)-[(R)-S(8)-aminomethyldihydrolipoyl]-L-lysyl-[glycine-cleavage complex H protein] + CO2. The glycine cleavage system catalyzes the degradation of glycine. The P protein binds the alpha-amino group of glycine through its pyridoxal phosphate cofactor; CO(2) is released and the remaining methylamine moiety is then transferred to the lipoamide cofactor of the H protein. The sequence is that of Glycine dehydrogenase (decarboxylating) 2 from Colwellia psychrerythraea (strain 34H / ATCC BAA-681) (Vibrio psychroerythus).